The primary structure comprises 323 residues: Protoheme IX farnesyltransferase (323 aa).

8 helical membrane-spanning segments follow: residues 50–70 (IVLI…ANTF), 97–117 (NRDA…WLWL), 118–138 (LCDS…YIFV), 150–170 (NIVW…AVIV), 184–204 (AIVL…ALAM), 231–248 (IVWY…LIPA), 252–274 (IYAA…LHLG), and 293–313 (YLAV…ETIG).

Belongs to the UbiA prenyltransferase family. Protoheme IX farnesyltransferase subfamily.

It is found in the cell membrane. The enzyme catalyses heme b + (2E,6E)-farnesyl diphosphate + H2O = Fe(II)-heme o + diphosphate. The protein operates within porphyrin-containing compound metabolism; heme O biosynthesis; heme O from protoheme: step 1/1. Functionally, converts heme B (protoheme IX) to heme O by substitution of the vinyl group on carbon 2 of heme B porphyrin ring with a hydroxyethyl farnesyl side group. The sequence is that of Protoheme IX farnesyltransferase from Corynebacterium glutamicum (strain R).